Consider the following 475-residue polypeptide: Sulfate adenylyltransferase subunit 1 (475 aa).

The tr-type G domain maps to 25–239; it reads KSLLRFLTCG…EVLETVEIQR (215 aa). The G1 stretch occupies residues 34 to 41; the sequence is GSVDDGKS. 34-41 lines the GTP pocket; that stretch reads GSVDDGKS. The G2 stretch occupies residues 92–96; the sequence is GITID. The tract at residues 113–116 is G3; that stretch reads DTPG. GTP-binding positions include 113-117 and 168-171; these read DTPGH and NKMD. The segment at 168–171 is G4; that stretch reads NKMD. The tract at residues 206-208 is G5; the sequence is SAL.

Belongs to the TRAFAC class translation factor GTPase superfamily. Classic translation factor GTPase family. CysN/NodQ subfamily. In terms of assembly, heterodimer composed of CysD, the smaller subunit, and CysN.

The catalysed reaction is sulfate + ATP + H(+) = adenosine 5'-phosphosulfate + diphosphate. It participates in sulfur metabolism; hydrogen sulfide biosynthesis; sulfite from sulfate: step 1/3. With CysD forms the ATP sulfurylase (ATPS) that catalyzes the adenylation of sulfate producing adenosine 5'-phosphosulfate (APS) and diphosphate, the first enzymatic step in sulfur assimilation pathway. APS synthesis involves the formation of a high-energy phosphoric-sulfuric acid anhydride bond driven by GTP hydrolysis by CysN coupled to ATP hydrolysis by CysD. The protein is Sulfate adenylyltransferase subunit 1 of Escherichia coli O139:H28 (strain E24377A / ETEC).